An 833-amino-acid polypeptide reads, in one-letter code: Leucine--tRNA ligase (833 aa).

Positions 41–52 match the 'HIGH' region motif; the sequence is PYPSGAGLHVGH. Positions 610-614 match the 'KMSKS' region motif; it reads KMSKS. Residue K613 coordinates ATP.

This sequence belongs to the class-I aminoacyl-tRNA synthetase family.

Its subcellular location is the cytoplasm. It catalyses the reaction tRNA(Leu) + L-leucine + ATP = L-leucyl-tRNA(Leu) + AMP + diphosphate. This chain is Leucine--tRNA ligase, found in Streptococcus pneumoniae serotype 4 (strain ATCC BAA-334 / TIGR4).